The following is a 182-amino-acid chain: RNA pyrophosphohydrolase (182 aa).

In terms of domain architecture, Nudix hydrolase spans 6 to 149 (GYRPNVGIIL…KRLVYEQALN (144 aa)). Residues 38-59 (GGIKRGETPEEAMFRELYEEVG) carry the Nudix box motif. The tract at residues 162-182 (PRHKKEQEPFSDVVDSVRSEE) is disordered.

This sequence belongs to the Nudix hydrolase family. RppH subfamily. A divalent metal cation serves as cofactor.

Its function is as follows. Accelerates the degradation of transcripts by removing pyrophosphate from the 5'-end of triphosphorylated RNA, leading to a more labile monophosphorylated state that can stimulate subsequent ribonuclease cleavage. This chain is RNA pyrophosphohydrolase, found in Dechloromonas aromatica (strain RCB).